A 599-amino-acid chain; its full sequence is Mediator of RNA polymerase II transcription subunit 26 (599 aa).

One can recognise a TFIIS N-terminal domain in the interval 10–87 (QIRDRLLQAI…RSWQKLIEPV (78 aa)). 3 disordered regions span residues 98–331 (AGAP…RLEL), 352–403 (AGLG…RDYT), and 427–470 (FDPM…LQSP). Over residues 123–133 (SVHDLKYRNDM) the composition is skewed to basic and acidic residues. The segment covering 174 to 191 (VPNSSPLPTNGISGSPES) has biased composition (polar residues). Residues 207-218 (NRLEHGENDKHS) show a composition bias toward basic and acidic residues. The segment covering 314 to 324 (SPLPLAQPSTP) has biased composition (pro residues). Residues 441-463 (EPVRADSPVHTEQPRTELDKPEA) are compositionally biased toward basic and acidic residues. Phosphoserine occurs at positions 447 and 469.

The protein belongs to the Mediator complex subunit 26 family. Component of the Mediator complex, which is composed of MED1, MED4, MED6, MED7, MED8, MED9, MED10, MED11, MED12, MED13, MED13L, MED14, MED15, MED16, MED17, MED18, MED19, MED20, MED21, MED22, MED23, MED24, MED25, MED26, MED27, MED29, MED30, MED31, CCNC, CDK8 and CDC2L6/CDK11. The MED12, MED13, CCNC and CDK8 subunits form a distinct module termed the CDK8 module. Mediator containing the CDK8 module is less active than Mediator lacking this module in supporting transcriptional activation. Individual preparations of the Mediator complex lacking one or more distinct subunits have been variously termed ARC, CRSP, DRIP, PC2, SMCC and TRAP. Interacts with CEBPB (when not methylated).

It is found in the nucleus. Its function is as follows. Component of the Mediator complex, a coactivator involved in the regulated transcription of nearly all RNA polymerase II-dependent genes. Mediator functions as a bridge to convey information from gene-specific regulatory proteins to the basal RNA polymerase II transcription machinery. Mediator is recruited to promoters by direct interactions with regulatory proteins and serves as a scaffold for the assembly of a functional pre-initiation complex with RNA polymerase II and the general transcription factors. This is Mediator of RNA polymerase II transcription subunit 26 (MED26) from Bos taurus (Bovine).